We begin with the raw amino-acid sequence, 212 residues long: Pyridoxine/pyridoxamine 5'-phosphate oxidase (212 aa).

Residues 8–11 and Lys66 each bind substrate; that span reads RKNY. FMN-binding positions include 61–66, 76–77, Arg82, Lys83, and Gln105; these read RIVLIK and FT. Substrate is bound by residues Tyr123, Arg127, and Ser131. FMN contacts are provided by residues 140–141 and Trp184; that span reads QS. 190-192 provides a ligand contact to substrate; that stretch reads RLH. Residue Arg194 participates in FMN binding.

Belongs to the pyridoxamine 5'-phosphate oxidase family. In terms of assembly, homodimer. FMN is required as a cofactor.

It catalyses the reaction pyridoxamine 5'-phosphate + O2 + H2O = pyridoxal 5'-phosphate + H2O2 + NH4(+). The enzyme catalyses pyridoxine 5'-phosphate + O2 = pyridoxal 5'-phosphate + H2O2. It functions in the pathway cofactor metabolism; pyridoxal 5'-phosphate salvage; pyridoxal 5'-phosphate from pyridoxamine 5'-phosphate: step 1/1. It participates in cofactor metabolism; pyridoxal 5'-phosphate salvage; pyridoxal 5'-phosphate from pyridoxine 5'-phosphate: step 1/1. In terms of biological role, catalyzes the oxidation of either pyridoxine 5'-phosphate (PNP) or pyridoxamine 5'-phosphate (PMP) into pyridoxal 5'-phosphate (PLP). The sequence is that of Pyridoxine/pyridoxamine 5'-phosphate oxidase from Paraburkholderia phymatum (strain DSM 17167 / CIP 108236 / LMG 21445 / STM815) (Burkholderia phymatum).